Here is a 145-residue protein sequence, read N- to C-terminus: MAKTVYVLNGPNLNTLGKREPGIYGGKTLADIEADCRAAAAGLGLEVEFRQSNHEGMLIDWIHEAGERGAGIVLNPGAYGHTSIALHDAIRAVSPLPVIEVHLSNIHAREPFRHRTMTAPVVAGMICGLGPIGYTLALQALAARL.

Residue Y24 is the Proton acceptor of the active site. Residues N75, H81, and D88 each coordinate substrate. Catalysis depends on H102, which acts as the Proton donor. Residues 103–104 and R113 each bind substrate; that span reads LS.

This sequence belongs to the type-II 3-dehydroquinase family. As to quaternary structure, homododecamer.

It catalyses the reaction 3-dehydroquinate = 3-dehydroshikimate + H2O. It functions in the pathway metabolic intermediate biosynthesis; chorismate biosynthesis; chorismate from D-erythrose 4-phosphate and phosphoenolpyruvate: step 3/7. Catalyzes a trans-dehydration via an enolate intermediate. This Chelativorans sp. (strain BNC1) protein is 3-dehydroquinate dehydratase.